The sequence spans 361 residues: Tetrathionate reductase subunit C (361 aa).

Helical transmembrane passes span 26–46 (FSYA…LALL), 53–73 (AIPM…LGPL), 104–124 (ALYG…FALL), 160–180 (LAAI…MLFF), 193–213 (LMLP…ALIL), 233–253 (GAAA…WGMW), 258–278 (FAAV…TFIL), 288–308 (ITPI…WNLI), and 334–354 (AVSP…IFPM).

It belongs to the NrfD family. As to quaternary structure, probably composed of three subunits: TtrA, TtrB and TtrC.

The protein localises to the cell membrane. Part of a membrane-bound tetrathionate reductase that catalyzes the reduction of tetrathionate to thiosulfate. TtrC probably anchors TtrA and TtrB to the external face of the cytoplasmic membrane. May transfer electrons from membrane quinol to TtrB. This chain is Tetrathionate reductase subunit C (ttrC), found in Archaeoglobus fulgidus (strain ATCC 49558 / DSM 4304 / JCM 9628 / NBRC 100126 / VC-16).